Consider the following 154-residue polypeptide: Myoglobin (154 aa).

The region spanning glycine 2–lysine 148 is the Globin domain. At serine 4 the chain carries Phosphoserine. Position 65 (histidine 65) interacts with nitrite. Histidine 65 contributes to the O2 binding site. The residue at position 68 (threonine 68) is a Phosphothreonine. Residue histidine 94 participates in heme b binding.

The protein belongs to the globin family. As to quaternary structure, monomeric.

It is found in the cytoplasm. The protein resides in the sarcoplasm. The enzyme catalyses Fe(III)-heme b-[protein] + nitric oxide + H2O = Fe(II)-heme b-[protein] + nitrite + 2 H(+). It carries out the reaction H2O2 + AH2 = A + 2 H2O. Monomeric heme protein which primary function is to store oxygen and facilitate its diffusion within muscle tissues. Reversibly binds oxygen through a pentacoordinated heme iron and enables its timely and efficient release as needed during periods of heightened demand. Depending on the oxidative conditions of tissues and cells, and in addition to its ability to bind oxygen, it also has a nitrite reductase activity whereby it regulates the production of bioactive nitric oxide. Under stress conditions, like hypoxia and anoxia, it also protects cells against reactive oxygen species thanks to its pseudoperoxidase activity. In Gorilla gorilla beringei (Mountain gorilla), this protein is Myoglobin (MB).